The following is a 344-amino-acid chain: Fructose-bisphosphate aldolase (344 aa).

Ser-53 is a binding site for D-glyceraldehyde 3-phosphate. Asp-95 (proton donor) is an active-site residue. Residues His-96, Asp-131, Glu-161, and His-212 each contribute to the Zn(2+) site. Residue Gly-213 coordinates dihydroxyacetone phosphate. His-252 is a binding site for Zn(2+). Residues 253 to 255 (GGS) and 274 to 277 (NVDT) each bind dihydroxyacetone phosphate.

This sequence belongs to the class II fructose-bisphosphate aldolase family. Zn(2+) is required as a cofactor.

It catalyses the reaction beta-D-fructose 1,6-bisphosphate = D-glyceraldehyde 3-phosphate + dihydroxyacetone phosphate. Its pathway is carbohydrate degradation; glycolysis; D-glyceraldehyde 3-phosphate and glycerone phosphate from D-glucose: step 4/4. Catalyzes the aldol condensation of dihydroxyacetone phosphate (DHAP or glycerone-phosphate) with glyceraldehyde 3-phosphate (G3P) to form fructose 1,6-bisphosphate (FBP) in gluconeogenesis and the reverse reaction in glycolysis. This is Fructose-bisphosphate aldolase (fba) from Mycobacterium bovis (strain ATCC BAA-935 / AF2122/97).